Here is a 1179-residue protein sequence, read N- to C-terminus: Integrin alpha-1 (1179 aa).

The signal sequence occupies residues 1-28; that stretch reads MVPRRPASLEVTVACIWLLTVILGVCIS. Over 29 to 1141 the chain is Extracellular; that stretch reads FNVDVKNSMS…SKDGLPGRVP (1113 aa). An FG-GAP 1 repeat occupies 30 to 91; that stretch reads NVDVKNSMSF…CPVGRERSMP (62 aa). C82 and C92 are oxidised to a cystine. N-linked (GlcNAc...) asparagine glycosylation is found at N100, N105, N112, N217, N317, N341, N402, N418, and N459. An FG-GAP 2 repeat occupies 101–160; sequence TSIPNVTEIKENMTFGSTLVTNPKGGFLACGPLYAYRCGHLHYTTGICSDVSPTFQVVNS. One can recognise a VWFA domain in the interval 175–364; sequence IVLDGSNSIY…LGERIFALEA (190 aa). One copy of the FG-GAP 3 repeat lies at 365 to 417; the sequence is TADQSAASFEMEMSQTGFSAHYSQDWVMLGAVGAYDWNGTVVMQKANQIVIPH. FG-GAP repeat units lie at residues 422–474, 475–537, 556–614, and 618–678; these read QTEP…DGDV, NILQ…RFEY, SCTK…TIRK, and QRIP…FEPN. 4 residues coordinate Ca(2+): D497, D499, D501, and D505. N-linked (GlcNAc...) asparagine glycosylation occurs at N531. Residues D579, N581, D583, D587, D641, N643, D645, and D649 each coordinate Ca(2+). The cysteines at positions 687 and 696 are disulfide-linked. 3 N-linked (GlcNAc...) asparagine glycosylation sites follow: N698, N747, and N779. C702 and C755 form a disulfide bridge. A disulfide bridge connects residues C807 and C813. Residues N839, N882, N907, N938, N965, N973, and N1007 are each glycosylated (N-linked (GlcNAc...) asparagine). A disulfide bond links C877 and C885. 2 disulfides stabilise this stretch: C1029–C1062 and C1065–C1072. N1083, N1102, and N1113 each carry an N-linked (GlcNAc...) asparagine glycan. The helical transmembrane segment at 1142–1164 threads the bilayer; that stretch reads LWVILLSAFAGLLLLMLLILALW. Topologically, residues 1165 to 1179 are cytoplasmic; that stretch reads KIGFFKRPLKKKMEK. The GFFKR motif signature appears at 1167 to 1171; the sequence is GFFKR.

Belongs to the integrin alpha chain family. In terms of assembly, heterodimer of an alpha and a beta subunit. Alpha-1 associates with beta-1. Interacts with RAB21. Interacts (via cytoplasmic domain) with PTPN2; activates PTPN2 phosphatase activity towards EGFR and negatively regulates EGF signaling.

The protein resides in the membrane. Integrin alpha-1/beta-1 is a receptor for laminin and collagen. It recognizes the proline-hydroxylated sequence G-F-P-G-E-R in collagen. Involved in anchorage-dependent, negative regulation of EGF-stimulated cell growth. This chain is Integrin alpha-1 (Itga1), found in Mus musculus (Mouse).